The chain runs to 894 residues: MNQIEPGVQYNYVYDEDEYMIQEEEWDRDLLLDPAWEKQQRKTFTAWCNSHLRKAGTQIENIEEDFRNGLKLMLLLEVISGERLPKPDRGKMRFHKIANVNKALDYIASKGVKLVSIGAEEIVDGNVKMTLGMIWTIILRFAIQDISVEETSAKEGLLLWCQRKTAPYRNVNIQNFHTSWKDGLGLCALIHRHRPDLIDYSKLNKDDPIGNINLAMEIAEKHLDIPKMLDAEDIVNTPKPDERAIMTYVSCFYHAFAGAEQAETAANRICKVLAVNQENERLMEEYERLASELLEWIRRTIPWLENRTPEKTMQAMQKKLEDFRDYRRKHKPPKVQEKCQLEINFNTLQTKLRISNRPAFMPSEGKMVSDIAGAWQRLEQAEKGYEEWLLNEIRRLERLEHLAEKFRQKASTHETWAYGKEQILLQKDYESASLTEVRALLRKHEAFESDLAAHQDRVEQIAAIAQELNELDYHDAVNVNDRCQKICDQWDRLGTLTQKRREALERMEKLLETIDQLHLEFAKRAAPFNNWMEGAMEDLQDMFIVHSIEEIQSLITAHEQFKATLPEADGERQSIMAIQNEVEKVIQSYNIRISSSNPYSTVTMDELRTKWDKVKQLVPIRDQSLQEELARQHANERLRRQFAAQANAIGPWIQNKMEEIARSSIQITGALEDQMNQLKQYEHNIINYKNNIDKLEGDHQLIQEALVFDNKHTNYTMEHIRVGWELLLTTIARTINEVETQILTRDAKGITQEQMNEFRASFNHFDRRKNGLMDHEDFRACLISMGYDLGEAEFARIMTLVDPNGQGTVTFQSFIDFMTRETADTDTAEQVIASFRILASDKPYILAEELRRELPPDQAQYCIKRMPAYSGPGSVPGALDYAAFSSALYGESDL.

The interval 1-254 (MNQIEPGVQY…IMTYVSCFYH (254 aa)) is actin-binding. 2 Calponin-homology (CH) domains span residues 38-142 (KQQR…LRFA) and 151-257 (TSAK…HAFA). T237 is subject to Phosphothreonine. 4 Spectrin repeats span residues 281–391 (RLME…WLLN), 401–506 (HLAE…ALER), 516–627 (QLHL…SLQE), and 637–740 (RLRR…EVET). 2 EF-hand domains span residues 753–788 (EQMN…MGYD) and 789–824 (LGEA…ETAD). Ca(2+)-binding residues include D766, N770, D777, D802, N804, and T808.

It belongs to the alpha-actinin family. In terms of assembly, homodimer; antiparallel. Also forms heterodimers with ACTN3. Interacts with ADAM12, MYOZ1, MYOZ2 and MYOZ3. Interacts via its C-terminal region with the LDB3 PDZ domain. Interacts with XIRP2. Interacts with DST isoform 1 (via N-terminus). Interacts with PARVB. Interacts with SYNPO2. In terms of processing, ubiquitinated by FBXL22, leading to proteasomal degradation. In terms of tissue distribution, expressed in both skeletal and cardiac muscle.

The protein resides in the cytoplasm. It is found in the myofibril. The protein localises to the sarcomere. It localises to the z line. In terms of biological role, F-actin cross-linking protein which is thought to anchor actin to a variety of intracellular structures. This is a bundling protein. The polypeptide is Alpha-actinin-2 (ACTN2) (Homo sapiens (Human)).